A 306-amino-acid polypeptide reads, in one-letter code: Methionyl-tRNA formyltransferase (306 aa).

(6S)-5,6,7,8-tetrahydrofolate is bound at residue 109–112 (SILP).

It belongs to the Fmt family.

It carries out the reaction L-methionyl-tRNA(fMet) + (6R)-10-formyltetrahydrofolate = N-formyl-L-methionyl-tRNA(fMet) + (6S)-5,6,7,8-tetrahydrofolate + H(+). Its function is as follows. Attaches a formyl group to the free amino group of methionyl-tRNA(fMet). The formyl group appears to play a dual role in the initiator identity of N-formylmethionyl-tRNA by promoting its recognition by IF2 and preventing the misappropriation of this tRNA by the elongation apparatus. The chain is Methionyl-tRNA formyltransferase from Herpetosiphon aurantiacus (strain ATCC 23779 / DSM 785 / 114-95).